A 199-amino-acid chain; its full sequence is Superoxide dismutase [Mn/Fe] (199 aa).

Positions 27, 81, 161, and 165 each coordinate Fe(3+). Mn(2+) is bound by residues His-27, His-81, Asp-161, and His-165.

This sequence belongs to the iron/manganese superoxide dismutase family. As to quaternary structure, homodimer. Mn(2+) serves as cofactor. Fe(3+) is required as a cofactor.

The catalysed reaction is 2 superoxide + 2 H(+) = H2O2 + O2. Destroys superoxide anion radicals which are normally produced within the cells and which are toxic to biological systems. Catalyzes the dismutation of superoxide anion radicals into O2 and H2O2 by successive reduction and oxidation of the transition metal ion at the active site. Also contributes to the inhibition of lipid oxidation. Manganese-preferring enzyme, less active with iron than with manganese. This Staphylococcus xylosus protein is Superoxide dismutase [Mn/Fe] (sodA).